Consider the following 306-residue polypeptide: Acetyl-coenzyme A carboxylase carboxyl transferase subunit beta (306 aa).

The CoA carboxyltransferase N-terminal domain occupies 25 to 294 (LWIKDPTSGE…VVTPSPPSPT (270 aa)). The segment at 284 to 306 (AVVTPSPPSPTDSQTSLSKTKAA) is disordered.

The protein belongs to the AccD/PCCB family. As to quaternary structure, acetyl-CoA carboxylase is a heterohexamer composed of biotin carboxyl carrier protein (AccB), biotin carboxylase (AccC) and two subunits each of ACCase subunit alpha (AccA) and ACCase subunit beta (AccD).

It is found in the cytoplasm. The catalysed reaction is N(6)-carboxybiotinyl-L-lysyl-[protein] + acetyl-CoA = N(6)-biotinyl-L-lysyl-[protein] + malonyl-CoA. It functions in the pathway lipid metabolism; malonyl-CoA biosynthesis; malonyl-CoA from acetyl-CoA: step 1/1. Functionally, component of the acetyl coenzyme A carboxylase (ACC) complex. Biotin carboxylase (BC) catalyzes the carboxylation of biotin on its carrier protein (BCCP) and then the CO(2) group is transferred by the transcarboxylase to acetyl-CoA to form malonyl-CoA. The protein is Acetyl-coenzyme A carboxylase carboxyl transferase subunit beta of Bartonella tribocorum (strain CIP 105476 / IBS 506).